Here is a 478-residue protein sequence, read N- to C-terminus: Glutamine synthetase (478 aa).

One can recognise a GS beta-grasp domain in the interval 16–100 (EKVEYVDVRF…INFFVHDPFT (85 aa)). One can recognise a GS catalytic domain in the interval 108-478 (PRNIARKAEN…PYEFALYYDV (371 aa)). E133 and E135 together coordinate Mg(2+). E214 is an ATP binding site. Mg(2+) contacts are provided by E219 and E227. 230-232 (YQF) contributes to the ATP binding site. L-glutamate is bound by residues 271–272 (NG) and G272. Mg(2+) is bound at residue H276. ATP contacts are provided by residues 278–280 (HQS) and S280. L-glutamate is bound by residues R329, E335, and R347. 3 residues coordinate ATP: R347, R352, and K361. E366 provides a ligand contact to Mg(2+). Position 368 (R368) interacts with L-glutamate. Y406 bears the O-AMP-tyrosine mark.

Belongs to the glutamine synthetase family. Oligomer of 12 subunits arranged in the form of two hexagons. Requires Mg(2+) as cofactor.

It is found in the cytoplasm. It carries out the reaction L-glutamate + NH4(+) + ATP = L-glutamine + ADP + phosphate + H(+). When cellular nitrogen levels are high, the C-terminal adenylyl transferase (AT) of GlnE inhibits GlnA by covalent transfer of an adenylyl group from ATP to Tyr-406. Conversely, when nitrogen levels are low, the N-terminal adenylyl removase (AR) of GlnE activates GlnA by removing the adenylyl group by phosphorolysis. The fully adenylated enzyme complex is inactive. Functionally, involved in nitrogen metabolism via ammonium assimilation. Catalyzes the ATP-dependent biosynthesis of glutamine from glutamate and ammonia. Also plays a key role in controlling the ammonia levels within infected host cells and so contributes to the pathogens capacity to inhibit phagosome acidification and phagosome-lysosome fusion. Involved in cell wall biosynthesis via the production of the major component poly-L-glutamine (PLG). PLG synthesis in the cell wall occurs only in nitrogen limiting conditions and on the contrary high nitrogen conditions inhibit PLG synthesis. This Mycobacterium bovis (strain ATCC BAA-935 / AF2122/97) protein is Glutamine synthetase.